Reading from the N-terminus, the 438-residue chain is Thymidine phosphorylase (438 aa).

This sequence belongs to the thymidine/pyrimidine-nucleoside phosphorylase family. Homodimer.

It carries out the reaction thymidine + phosphate = 2-deoxy-alpha-D-ribose 1-phosphate + thymine. It functions in the pathway pyrimidine metabolism; dTMP biosynthesis via salvage pathway; dTMP from thymine: step 1/2. The enzymes which catalyze the reversible phosphorolysis of pyrimidine nucleosides are involved in the degradation of these compounds and in their utilization as carbon and energy sources, or in the rescue of pyrimidine bases for nucleotide synthesis. In Agrobacterium fabrum (strain C58 / ATCC 33970) (Agrobacterium tumefaciens (strain C58)), this protein is Thymidine phosphorylase.